The following is a 162-amino-acid chain: Peroxiredoxin-2C (162 aa).

The Thioredoxin domain maps to 4–162 (VAVGDTLPDG…SGAEEILKAL (159 aa)). The active-site Cysteine sulfenic acid (-SOH) intermediate is Cys51.

It belongs to the peroxiredoxin family. Prx5 subfamily. Monomer.

The protein resides in the cytoplasm. The catalysed reaction is [glutaredoxin]-dithiol + a hydroperoxide = [glutaredoxin]-disulfide + an alcohol + H2O. In terms of biological role, reduces hydrogen peroxide and alkyl hydroperoxides with reducing equivalents provided through the thioredoxin or glutaredoxin system. May be involved in intracellular redox signaling. Functionally, thiol-specific peroxidase that catalyzes the reduction of hydrogen peroxide and organic hydroperoxides to water and alcohols, respectively. Plays a role in cell protection against oxidative stress by detoxifying peroxides. The protein is Peroxiredoxin-2C (PRXIIC) of Oryza sativa subsp. japonica (Rice).